A 63-amino-acid polypeptide reads, in one-letter code: Large ribosomal subunit protein bL33m (63 aa).

Belongs to the bacterial ribosomal protein bL33 family.

The protein localises to the mitochondrion. This Dictyostelium discoideum (Social amoeba) protein is Large ribosomal subunit protein bL33m (mrpl33).